Here is a 382-residue protein sequence, read N- to C-terminus: D-galactonate dehydratase (382 aa).

Asp183 lines the Mg(2+) pocket. The active-site Proton donor is the His185. 2 residues coordinate Mg(2+): Glu209 and Glu235. His285 (proton acceptor) is an active-site residue. Residues 361-382 (NENPPDWRNPVWRHSDGSIAEW) form a disordered region.

This sequence belongs to the mandelate racemase/muconate lactonizing enzyme family. GalD subfamily. It depends on Mg(2+) as a cofactor.

The enzyme catalyses D-galactonate = 2-dehydro-3-deoxy-D-galactonate + H2O. Its pathway is carbohydrate acid metabolism; D-galactonate degradation; D-glyceraldehyde 3-phosphate and pyruvate from D-galactonate: step 1/3. Catalyzes the dehydration of D-galactonate to 2-keto-3-deoxy-D-galactonate. The sequence is that of D-galactonate dehydratase from Xanthomonas euvesicatoria pv. vesicatoria (strain 85-10) (Xanthomonas campestris pv. vesicatoria).